The sequence spans 77 residues: MLCLPVFIILLLLASPAASNPLETRIQSDLIRAALEDADMKNEKNILSSIMGSLGTIGNVVGNVCCSITKSCCASEE.

Positions 1-19 (MLCLPVFIILLLLASPAAS) are cleaved as a signal peptide. Positions 20–44 (NPLETRIQSDLIRAALEDADMKNEK) are excised as a propeptide.

Belongs to the conotoxin T superfamily. In terms of processing, contains 2 disulfide bonds that can be either 'C1-C3, C2-C4' or 'C1-C4, C2-C3', since these disulfide connectivities have been observed for conotoxins with cysteine framework V (for examples, see AC P0DQQ7 and AC P81755). In terms of tissue distribution, expressed by the venom duct.

Its subcellular location is the secreted. The protein is Conotoxin Ar5.1 a of Conus arenatus (Sand-dusted cone).